Reading from the N-terminus, the 483-residue chain is MGDATATEVFPVMDSIAVAMGDVESQLRVFHNVSRFLPTDDANQVFWWRTTGRHFAIMMHEARYSEARQVELLLFYRFVIAPRLGPRPTSATPWFHSRVAPGIGDGSPIGYSWRWGTGPDTKPLIRHYIEAIGPLTGTTADPLNEFAAKEMLYQLGQLVPGVELPLAWKFAAHIRPSLTDEPTRAVAGSSILIGLQCAPESAGIEVMAGLMTRSPAQVPELLHSIFPRAMRDAYGPDASLDGLNMVRDFVCHDPQGQYLTILGTTAIDCCAAASSRFKVYVTTTNTSFAHLAAVMTLGGRKPEAPESLTQLQELWYALKGLDPEFPVTAEPLSSVCGAANGTASGNPNANVSGVTFYFDIHPKYPFPHIKLQVDISKHTISDLGAINAVTEFLARRGQAADAQAYLNVVRAMVPDEELRTRRGLQAFFAFAFKNGAVDITSYFLPQIYRRYAEVQAELEPRKDCQGRSELSSKLQRRSRFDSY.

The protein belongs to the tryptophan dimethylallyltransferase family.

It functions in the pathway secondary metabolite biosynthesis; terpenoid biosynthesis. In terms of biological role, prenyltransferase; part of the gene cluster that mediates the biosynthesis of viridicatumtoxin, a tetracycline-like fungal meroterpenoid with a unique, fused spirobicyclic ring system. The first step of the pathway is the production of the malonamoyl-CoA starter unit for the polyketide synthase vrtA. The aldolase vrtJ may be involved in the synthesis of the malonamate substrate for malonamoyl-CoA synthetase vrtB. The polyketide synthase vrtA then may utilize the malonamoyl-CoA starter unit, followed by sequential condensation of eight malonyl-CoA units to form the polyketide backbone. The cyclization of the last ring could be mediated by the lactamase-like protein vrtG. The proposed post-PKS tailoring steps are a hydroxylation at C5 catalyzed the cytochrome P450 monooxygenase vrtE, a hydroxylation at C12a catalyzed by VrtH and/or VrtI, and an O-methylation by the O-methyltransferase vrtF. VrtC is then proposed to catalyze the transfer of a geranyl group synthesized by vrtD to the aromatic C ring of the tetracyclic polyketide intermediate of viridicatumtoxin to yield previridicatumtoxin. Finally, the cytochrome P450 monooxygenase vrtK catalyzes the spirocyclization of the geranyl moiety of previridicatumtoxin to afford viridicatumtoxin. The chain is Prenyltransferase vrtC from Penicillium aethiopicum.